Here is a 216-residue protein sequence, read N- to C-terminus: UPF0323 lipoprotein HPAG1_0235 (216 aa).

An N-terminal signal peptide occupies residues 1-27 (MKKPYRKISDYAIVGGLSALVMVSIVG). C28 carries the N-palmitoyl cysteine lipid modification. C28 carries the S-diacylglycerol cysteine lipid modification. A compositionally biased stretch (polar residues) spans 159-196 (QRTYKSPQAYQRSQNSFSKSAPSASGMGTASKGQSGFF). Positions 159-216 (QRTYKSPQAYQRSQNSFSKSAPSASGMGTASKGQSGFFGSSRPTSSPAVSSGTRGFNA) are disordered. The segment covering 198-209 (SSRPTSSPAVSS) has biased composition (low complexity).

Belongs to the UPF0323 family.

It is found in the cell membrane. This is UPF0323 lipoprotein HPAG1_0235 from Helicobacter pylori (strain HPAG1).